A 136-amino-acid chain; its full sequence is Large ribosomal subunit protein uL16c (136 aa).

It belongs to the universal ribosomal protein uL16 family. Part of the 50S ribosomal subunit.

Its subcellular location is the plastid. The protein localises to the chloroplast. In Saccharum hybrid (Sugarcane), this protein is Large ribosomal subunit protein uL16c.